Consider the following 349-residue polypeptide: Ferredoxin--NADP reductase 3 (349 aa).

FAD-binding residues include Glu34, Lys42, Tyr46, Val86, Ile120, Asp287, and Ser328.

It belongs to the ferredoxin--NADP reductase type 2 family. Homodimer. It depends on FAD as a cofactor.

It catalyses the reaction 2 reduced [2Fe-2S]-[ferredoxin] + NADP(+) + H(+) = 2 oxidized [2Fe-2S]-[ferredoxin] + NADPH. The sequence is that of Ferredoxin--NADP reductase 3 from Lysinibacillus sphaericus (strain C3-41).